Here is a 73-residue protein sequence, read N- to C-terminus: Antimicrobial peptide 6 (73 aa).

The first 22 residues, 1–22 (MQIKHLITLFFLVLIVADQCSA), serve as a signal peptide directing secretion. Residues 45 to 73 (EISTQIDQYRNLQKREAELEELLDRLPMY) constitute a propeptide that is removed on maturation.

Belongs to the non-disulfide-bridged peptide (NDBP) superfamily. Short antimicrobial peptide (group 4) family. Expressed by the venom gland.

It localises to the secreted. Functionally, antibacterial peptide. The polypeptide is Antimicrobial peptide 6 (Tityus costatus (Brazilian scorpion)).